A 381-amino-acid chain; its full sequence is Creatine kinase M-type (381 aa).

In terms of domain architecture, Phosphagen kinase N-terminal spans 11–98 (KLNYKPEEEY…FDPIISDRHG (88 aa)). In terms of domain architecture, Phosphagen kinase C-terminal spans 125–367 (YVLSSRVRTG…KLMVEMEKKL (243 aa)). 128–132 (SSRVR) is a binding site for ATP. Ser-164 is subject to Phosphoserine. Thr-166 carries the phosphothreonine modification. Ser-178 is subject to Phosphoserine. Thr-180 is subject to Phosphothreonine. ATP is bound at residue His-191. Ser-199 carries the post-translational modification Phosphoserine. Positions 236 and 292 each coordinate ATP. A phosphothreonine mark is found at Thr-313 and Thr-322. ATP contacts are provided by residues 320 to 325 (RGTGGV) and Asp-335. Phosphoserine is present on Ser-372.

The protein belongs to the ATP:guanido phosphotransferase family. As to quaternary structure, dimer of identical or non-identical chains, which can be either B (brain type) or M (muscle type). With MM being the major form in skeletal muscle and myocardium, MB existing in myocardium, and BB existing in many tissues, especially brain.

It localises to the cytoplasm. It catalyses the reaction creatine + ATP = N-phosphocreatine + ADP + H(+). Its function is as follows. Reversibly catalyzes the transfer of phosphate between ATP and various phosphogens (e.g. creatine phosphate). Creatine kinase isoenzymes play a central role in energy transduction in tissues with large, fluctuating energy demands, such as skeletal muscle, heart, brain and spermatozoa. The protein is Creatine kinase M-type (CKM) of Homo sapiens (Human).